The primary structure comprises 898 residues: Phosphoenolpyruvate carboxylase (898 aa).

Active-site residues include histidine 138 and lysine 561.

The protein belongs to the PEPCase type 1 family. Mg(2+) serves as cofactor.

It catalyses the reaction oxaloacetate + phosphate = phosphoenolpyruvate + hydrogencarbonate. Functionally, forms oxaloacetate, a four-carbon dicarboxylic acid source for the tricarboxylic acid cycle. The polypeptide is Phosphoenolpyruvate carboxylase (Streptococcus pneumoniae serotype 4 (strain ATCC BAA-334 / TIGR4)).